Reading from the N-terminus, the 1115-residue chain is Carbamoyl phosphate synthase large chain (1115 aa).

The segment at 1-407 is carboxyphosphate synthetic domain; it reads MPRRTDLHHV…ALGKVMRSLE (407 aa). The ATP site is built by arginine 134, arginine 174, glycine 180, glycine 181, glutamate 213, isoleucine 215, glutamate 220, glycine 246, valine 247, histidine 248, glutamine 290, and glutamate 304. Residues 138 to 333 enclose the ATP-grasp 1 domain; that stretch reads KDIVAKAGGE…IAKIAAKLAI (196 aa). Residues glutamine 290, glutamate 304, and asparagine 306 each coordinate Mg(2+). 3 residues coordinate Mn(2+): glutamine 290, glutamate 304, and asparagine 306. Positions 408–559 are oligomerization domain; that stretch reads TTRAGFWTAP…ELDPAAETEV (152 aa). Positions 560-965 are carbamoyl phosphate synthetic domain; the sequence is APQTERPKVL…AFAKSQTAAY (406 aa). One can recognise an ATP-grasp 2 domain in the interval 693-884; that stretch reads GDLLSAAGLP…LAKACARIML (192 aa). ATP is bound by residues arginine 729, arginine 768, leucine 770, glutamate 775, glycine 800, isoleucine 801, histidine 802, serine 803, glutamine 843, and glutamate 855. Mg(2+) is bound by residues glutamine 843, glutamate 855, and asparagine 857. 3 residues coordinate Mn(2+): glutamine 843, glutamate 855, and asparagine 857. The 148-residue stretch at 966-1113 folds into the MGS-like domain; the sequence is GSLPAQGTVF…QELHRVIGGV (148 aa). Residues 966 to 1115 form an allosteric domain region; that stretch reads GSLPAQGTVF…LHRVIGGVER (150 aa).

The protein belongs to the CarB family. As to quaternary structure, composed of two chains; the small (or glutamine) chain promotes the hydrolysis of glutamine to ammonia, which is used by the large (or ammonia) chain to synthesize carbamoyl phosphate. Tetramer of heterodimers (alpha,beta)4. The cofactor is Mg(2+). Mn(2+) serves as cofactor.

It carries out the reaction hydrogencarbonate + L-glutamine + 2 ATP + H2O = carbamoyl phosphate + L-glutamate + 2 ADP + phosphate + 2 H(+). The enzyme catalyses hydrogencarbonate + NH4(+) + 2 ATP = carbamoyl phosphate + 2 ADP + phosphate + 2 H(+). It functions in the pathway amino-acid biosynthesis; L-arginine biosynthesis; carbamoyl phosphate from bicarbonate: step 1/1. It participates in pyrimidine metabolism; UMP biosynthesis via de novo pathway; (S)-dihydroorotate from bicarbonate: step 1/3. In terms of biological role, large subunit of the glutamine-dependent carbamoyl phosphate synthetase (CPSase). CPSase catalyzes the formation of carbamoyl phosphate from the ammonia moiety of glutamine, carbonate, and phosphate donated by ATP, constituting the first step of 2 biosynthetic pathways, one leading to arginine and/or urea and the other to pyrimidine nucleotides. The large subunit (synthetase) binds the substrates ammonia (free or transferred from glutamine from the small subunit), hydrogencarbonate and ATP and carries out an ATP-coupled ligase reaction, activating hydrogencarbonate by forming carboxy phosphate which reacts with ammonia to form carbamoyl phosphate. The chain is Carbamoyl phosphate synthase large chain from Mycobacterium tuberculosis (strain CDC 1551 / Oshkosh).